Here is an 859-residue protein sequence, read N- to C-terminus: Envelope glycoprotein gp160 (859 aa).

Positions 1–24 are cleaved as a signal peptide; the sequence is MCGRNQLFVASLLASACLIYCVQY. Topologically, residues 25–673 are extracellular; that stretch reads VTVFYGVPVW…LTSWIKYIQY (649 aa). A glycan (N-linked (GlcNAc...) asparagine; by host) is linked at Asn-36. The cysteines at positions 43 and 56 are disulfide-linked. N-linked (GlcNAc...) asparagine; by host glycans are attached at residues Asn-69, Asn-78, Asn-113, Asn-119, Asn-131, Asn-137, Asn-145, Asn-160, Asn-173, Asn-186, Asn-200, Asn-232, Asn-235, Asn-242, Asn-266, Asn-272, Asn-283, Asn-294, Asn-304, Asn-359, Asn-392, Asn-402, Asn-405, Asn-442, Asn-457, and Asn-460. Intrachain disulfides connect Cys-100–Cys-208, Cys-107–Cys-199, Cys-112–Cys-157, Cys-221–Cys-251, and Cys-231–Cys-243. Positions 112 to 156 are V1; it reads CNSTTAKNTTSTPTTTTTANTTIGENSSCIRTDNCTGLGEEEMVD. The V2 stretch occupies residues 157-199; sequence CQFNMTGLERDKKKLYNETWYSKDVVCESNDTKKEKTCYMNHC. A V3 region spans residues 299–331; it reads CKRPGNKTVVPITLMSGLVFHSQPINRRPRQAW. Cys-299 and Cys-332 are oxidised to a cystine. 2 disulfide bridges follow: Cys-384–Cys-441 and Cys-391–Cys-414. The segment at 391-414 is V4; it reads CNMTWFLNWVENRTNQTQHNYVPC. The tract at residues 457–463 is V5; that stretch reads NQTNITF. Residues 506–526 form a fusion peptide region; sequence GVFVLGFLGFLTTAGAAMGAA. Positions 569–585 are immunosuppression; sequence LQARVTAIEKYLKDQAQ. N-linked (GlcNAc...) asparagine; by host glycans are attached at residues Asn-605, Asn-614, and Asn-630. The stretch at 614–646 forms a coiled coil; that stretch reads NMTWQEWEQRIRNLEANISESLEQAQIQQEKNM. The interval 651–672 is MPER; binding to GalCer; it reads KLNSWDVFGNWFDLTSWIKYIQ. The chain crosses the membrane as a helical span at residues 674–694; the sequence is GVYIVVGIIVLRIVIYVVQML. At 695 to 859 the chain is on the cytoplasmic side; sequence SRLRKGYRPV…IRQGAEIALL (165 aa). Positions 701–704 match the YXXV motif; contains endocytosis signal motif; sequence YRPV. A lipid anchor (S-palmitoyl cysteine; by host) is attached at Cys-767. The short motif at 858 to 859 is the Di-leucine internalization motif element; sequence LL.

As to quaternary structure, the mature envelope protein (Env) consists of a homotrimer of non-covalently associated gp120-gp41 heterodimers. The resulting complex protrudes from the virus surface as a spike. There seems to be as few as 10 spikes on the average virion. Interacts with human CD4, CCR5 and CXCR4, to form a P4HB/PDI-CD4-CXCR4-gp120 complex. Gp120 also interacts with the C-type lectins CD209/DC-SIGN and CLEC4M/DC-SIGNR (collectively referred to as DC-SIGN(R)). Gp120 and gp41 interact with GalCer. In terms of assembly, the mature envelope protein (Env) consists of a homotrimer of non-covalently associated gp120-gp41 heterodimers. The resulting complex protrudes from the virus surface as a spike. There seems to be as few as 10 spikes on the average virion. Post-translationally, specific enzymatic cleavages in vivo yield mature proteins. Envelope glycoproteins are synthesized as an inactive precursor that is heavily N-glycosylated and processed likely by host cell furin in the Golgi to yield the mature SU and TM proteins. The cleavage site between SU and TM requires the minimal sequence [KR]-X-[KR]-R. In terms of processing, palmitoylation of the transmembrane protein and of Env polyprotein (prior to its proteolytic cleavage) is essential for their association with host cell membrane lipid rafts. Palmitoylation is therefore required for envelope trafficking to classical lipid rafts, but not for viral replication.

It is found in the virion membrane. The protein localises to the host cell membrane. It localises to the host endosome membrane. In terms of biological role, the surface protein gp120 (SU) attaches the virus to the host lymphoid cell by binding to the primary receptor CD4. This interaction induces a structural rearrangement creating a high affinity binding site for a chemokine coreceptor like CXCR4 and/or CCR5. This peculiar 2 stage receptor-interaction strategy allows gp120 to maintain the highly conserved coreceptor-binding site in a cryptic conformation, protected from neutralizing antibodies. Since CD4 also displays a binding site for the disulfide-isomerase P4HB/PDI, a P4HB/PDI-CD4-CXCR4-gp120 complex may form. In that complex, P4HB/PDI could reach and reduce gp120 disulfide bonds, causing major conformational changes in gp120. TXN, another PDI family member could also be involved in disulfide rearrangements in Env during fusion. These changes are transmitted to the transmembrane protein gp41 and are thought to activate its fusogenic potential by unmasking its fusion peptide. Functionally, the surface protein gp120 is a ligand for CD209/DC-SIGN and CLEC4M/DC-SIGNR, which are respectively found on dendritic cells (DCs), and on endothelial cells of liver sinusoids and lymph node sinuses. These interactions allow capture of viral particles at mucosal surfaces by these cells and subsequent transmission to permissive cells. DCs are professional antigen presenting cells, critical for host immunity by inducing specific immune responses against a broad variety of pathogens. They act as sentinels in various tissues where they take up antigen, process it, and present it to T-cells following migration to lymphoid organs. HIV subverts the migration properties of dendritic cells to gain access to CD4+ T-cells in lymph nodes. Virus transmission to permissive T-cells occurs either in trans (without DCs infection, through viral capture and transmission), or in cis (following DCs productive infection, through the usual CD4-gp120 interaction), thereby inducing a robust infection. In trans infection, bound virions remain infectious over days and it is proposed that they are not degraded, but protected in non-lysosomal acidic organelles within the DCs close to the cell membrane thus contributing to the viral infectious potential during DCs' migration from the periphery to the lymphoid tissues. On arrival at lymphoid tissues, intact virions recycle back to DCs' cell surface allowing virus transmission to CD4+ T-cells. Virion capture also seems to lead to MHC-II-restricted viral antigen presentation, and probably to the activation of HIV-specific CD4+ cells. The transmembrane protein gp41 (TM) acts as a class I viral fusion protein. Under the current model, the protein has at least 3 conformational states: pre-fusion native state, pre-hairpin intermediate state, and post-fusion hairpin state. During fusion of viral and target intracellular membranes, the coiled coil regions (heptad repeats) assume a trimer-of-hairpins structure, positioning the fusion peptide in close proximity to the C-terminal region of the ectodomain. The formation of this structure appears to drive apposition and subsequent fusion of viral and target cell membranes. Complete fusion occurs in host cell endosomes and is dynamin-dependent, however some lipid transfer might occur at the plasma membrane. The virus undergoes clathrin-dependent internalization long before endosomal fusion, thus minimizing the surface exposure of conserved viral epitopes during fusion and reducing the efficacy of inhibitors targeting these epitopes. Membranes fusion leads to delivery of the nucleocapsid into the cytoplasm. Its function is as follows. The envelope glycoprotein gp160 precursor down-modulates cell surface CD4 antigen by interacting with it in the endoplasmic reticulum and blocking its transport to the cell surface. In terms of biological role, the gp120-gp41 heterodimer seems to contribute to T-cell depletion during HIV-1 infection. The envelope glycoproteins expressed on the surface of infected cells induce apoptosis through an interaction with uninfected cells expressing the receptor (CD4) and the coreceptors CXCR4 or CCR5. This type of bystander killing may be obtained by at least three distinct mechanisms. First, the interaction between the 2 cells can induce cellular fusion followed by nuclear fusion within the syncytium. Syncytia are condemned to die from apoptosis. Second, the 2 interacting cells may not fuse entirely and simply exchange plasma membrane lipids, after a sort of hemifusion process, followed by rapid death. Third, it is possible that virus-infected cells, on the point of undergoing apoptosis, fuse with CD4-expressing cells, in which case apoptosis is rapidly transmitted from one cell to the other and thus occurs in a sort of contagious fashion. Functionally, the gp120-gp41 heterodimer allows rapid transcytosis of the virus through CD4 negative cells such as simple epithelial monolayers of the intestinal, rectal and endocervical epithelial barriers. Both gp120 and gp41 specifically recognize glycosphingolipids galactosyl-ceramide (GalCer) or 3' sulfo-galactosyl-ceramide (GalS) present in the lipid rafts structures of epithelial cells. Binding to these alternative receptors allows the rapid transcytosis of the virus through the epithelial cells. This transcytotic vesicle-mediated transport of virions from the apical side to the basolateral side of the epithelial cells does not involve infection of the cells themselves. This Homo sapiens (Human) protein is Envelope glycoprotein gp160 (env).